A 425-amino-acid chain; its full sequence is E3 ubiquitin-protein ligase GW2 (425 aa).

The RING-type; degenerate zinc-finger motif lies at 62-105 (CPICFLYYPSLNRSKCCSKGICTECFLQMKPTHTAQPTQCPFCK).

As to expression, expressed in roots, shoots, leaves, inflorescence meristems, stamens, pistils, spikelet hulls and endosperms 4 days after fertilization.

The protein resides in the cytoplasm. The catalysed reaction is S-ubiquitinyl-[E2 ubiquitin-conjugating enzyme]-L-cysteine + [acceptor protein]-L-lysine = [E2 ubiquitin-conjugating enzyme]-L-cysteine + N(6)-ubiquitinyl-[acceptor protein]-L-lysine.. Its pathway is protein modification; protein ubiquitination. In terms of biological role, E3 ubiquitin-protein ligase involved in the regulation of grain size. May limit grain width and weight by restricting cell proliferation of the spikelet hull. Possesses E3 ubiquitin-protein ligase activity in vitro. This Oryza sativa subsp. indica (Rice) protein is E3 ubiquitin-protein ligase GW2.